Here is a 359-residue protein sequence, read N- to C-terminus: DNA integrity scanning protein DisA (359 aa).

The 139-residue stretch at 7–145 folds into the DAC domain; the sequence is DDIFRATLAA…AGRRYVLDGA (139 aa). ATP is bound by residues glycine 74, leucine 92, and 105-109; that span reads TRHRT.

This sequence belongs to the DisA family. In terms of assembly, homooctamer. Requires Mg(2+) as cofactor.

The catalysed reaction is 2 ATP = 3',3'-c-di-AMP + 2 diphosphate. In terms of biological role, participates in a DNA-damage check-point that is active prior to asymmetric division when DNA is damaged. DisA forms globular foci that rapidly scan along the chromosomes during sporulation, searching for lesions. When a lesion is present, DisA pauses at the lesion site. This triggers a cellular response that culminates in a temporary block in sporulation initiation. Its function is as follows. Also has diadenylate cyclase activity, catalyzing the condensation of 2 ATP molecules into cyclic di-AMP (c-di-AMP). c-di-AMP acts as a signaling molecule that couples DNA integrity with progression of sporulation. The rise in c-di-AMP level generated by DisA while scanning the chromosome, operates as a positive signal that advances sporulation; upon encountering a lesion, the DisA focus arrests at the damaged site and halts c-di-AMP synthesis. This is DNA integrity scanning protein DisA from Parafrankia sp. (strain EAN1pec).